Here is a 292-residue protein sequence, read N- to C-terminus: uncharacterized protein (292 aa).

A signal peptide spans 1-21 (MNSNSNKKRDPARFPAGVAQG). Residues 1–30 (MNSNSNKKRDPARFPAGVAQGCSTTRAGDL) are disordered.

This is an uncharacterized protein from Treponema pallidum (strain Nichols).